A 313-amino-acid chain; its full sequence is tRNA-cytidine(32) 2-sulfurtransferase (313 aa).

The PP-loop motif motif lies at 46 to 51 (SGGKDS). Residues cysteine 121, cysteine 124, and cysteine 212 each coordinate [4Fe-4S] cluster.

Belongs to the TtcA family. Homodimer. Requires Mg(2+) as cofactor. It depends on [4Fe-4S] cluster as a cofactor.

It is found in the cytoplasm. It catalyses the reaction cytidine(32) in tRNA + S-sulfanyl-L-cysteinyl-[cysteine desulfurase] + AH2 + ATP = 2-thiocytidine(32) in tRNA + L-cysteinyl-[cysteine desulfurase] + A + AMP + diphosphate + H(+). It functions in the pathway tRNA modification. Catalyzes the ATP-dependent 2-thiolation of cytidine in position 32 of tRNA, to form 2-thiocytidine (s(2)C32). The sulfur atoms are provided by the cysteine/cysteine desulfurase (IscS) system. The sequence is that of tRNA-cytidine(32) 2-sulfurtransferase from Nitrosomonas eutropha (strain DSM 101675 / C91 / Nm57).